The sequence spans 130 residues: Small ribosomal subunit protein uS11 (130 aa).

Belongs to the universal ribosomal protein uS11 family. Part of the 30S ribosomal subunit. Interacts with proteins S7 and S18. Binds to IF-3.

Located on the platform of the 30S subunit, it bridges several disparate RNA helices of the 16S rRNA. Forms part of the Shine-Dalgarno cleft in the 70S ribosome. The polypeptide is Small ribosomal subunit protein uS11 (Moorella thermoacetica (strain ATCC 39073 / JCM 9320)).